Consider the following 209-residue polypeptide: Thiamine-phosphate synthase (209 aa).

4-amino-2-methyl-5-(diphosphooxymethyl)pyrimidine-binding positions include 38 to 42 (QYRDK) and Asn70. The Mg(2+) site is built by Asp71 and Asp89. Position 108 (Thr108) interacts with 4-amino-2-methyl-5-(diphosphooxymethyl)pyrimidine. 135–137 (SNT) contributes to the 2-[(2R,5Z)-2-carboxy-4-methylthiazol-5(2H)-ylidene]ethyl phosphate binding site. Residue Lys138 participates in 4-amino-2-methyl-5-(diphosphooxymethyl)pyrimidine binding. Gly165 contacts 2-[(2R,5Z)-2-carboxy-4-methylthiazol-5(2H)-ylidene]ethyl phosphate.

The protein belongs to the thiamine-phosphate synthase family. Mg(2+) is required as a cofactor.

The enzyme catalyses 2-[(2R,5Z)-2-carboxy-4-methylthiazol-5(2H)-ylidene]ethyl phosphate + 4-amino-2-methyl-5-(diphosphooxymethyl)pyrimidine + 2 H(+) = thiamine phosphate + CO2 + diphosphate. The catalysed reaction is 2-(2-carboxy-4-methylthiazol-5-yl)ethyl phosphate + 4-amino-2-methyl-5-(diphosphooxymethyl)pyrimidine + 2 H(+) = thiamine phosphate + CO2 + diphosphate. It carries out the reaction 4-methyl-5-(2-phosphooxyethyl)-thiazole + 4-amino-2-methyl-5-(diphosphooxymethyl)pyrimidine + H(+) = thiamine phosphate + diphosphate. Its pathway is cofactor biosynthesis; thiamine diphosphate biosynthesis; thiamine phosphate from 4-amino-2-methyl-5-diphosphomethylpyrimidine and 4-methyl-5-(2-phosphoethyl)-thiazole: step 1/1. Its function is as follows. Condenses 4-methyl-5-(beta-hydroxyethyl)thiazole monophosphate (THZ-P) and 2-methyl-4-amino-5-hydroxymethyl pyrimidine pyrophosphate (HMP-PP) to form thiamine monophosphate (TMP). In Ectopseudomonas mendocina (strain ymp) (Pseudomonas mendocina), this protein is Thiamine-phosphate synthase.